A 962-amino-acid chain; its full sequence is Translation initiation factor IF-2 (962 aa).

Disordered regions lie at residues 122–263 (EVGV…EPAR), 293–327 (TEEV…TRRK), and 341–362 (IAAQ…AKEP). Low complexity predominate over residues 156–173 (AVEPQTVVPPVAAPAAEV). Residues 188–202 (KPPEEKETKVKHAEP) are compositionally biased toward basic and acidic residues. Positions 244-256 (RPKKAKKRRRKKV) are enriched in basic residues. Composition is skewed to basic and acidic residues over residues 308–327 (RPEE…TRRK) and 344–362 (QDDR…AKEP). The tr-type G domain maps to 455-624 (RRPPVITVMG…LLQAELLELK (170 aa)). A G1 region spans residues 464–471 (GHVDHGKT). 464–471 (GHVDHGKT) is a GTP binding site. The interval 489 to 493 (GITQH) is G2. Residues 510–513 (DTPG) form a G3 region. GTP contacts are provided by residues 510-514 (DTPGH) and 564-567 (NKVD). A G4 region spans residues 564–567 (NKVD). Residues 600-602 (SAK) form a G5 region.

The protein belongs to the TRAFAC class translation factor GTPase superfamily. Classic translation factor GTPase family. IF-2 subfamily.

The protein resides in the cytoplasm. One of the essential components for the initiation of protein synthesis. Protects formylmethionyl-tRNA from spontaneous hydrolysis and promotes its binding to the 30S ribosomal subunits. Also involved in the hydrolysis of GTP during the formation of the 70S ribosomal complex. In Syntrophobacter fumaroxidans (strain DSM 10017 / MPOB), this protein is Translation initiation factor IF-2.